Reading from the N-terminus, the 329-residue chain is DNA-directed RNA polymerase subunit alpha (329 aa).

Residues 1–234 (MQGSVTEFLK…EQLDAFVELR (234 aa)) are alpha N-terminal domain (alpha-NTD). An alpha C-terminal domain (alpha-CTD) region spans residues 248–329 (FDPILLRPVD…WPPASLVDDL (82 aa)).

It belongs to the RNA polymerase alpha chain family. In terms of assembly, homodimer. The RNAP catalytic core consists of 2 alpha, 1 beta, 1 beta' and 1 omega subunit. When a sigma factor is associated with the core the holoenzyme is formed, which can initiate transcription.

The enzyme catalyses RNA(n) + a ribonucleoside 5'-triphosphate = RNA(n+1) + diphosphate. In terms of biological role, DNA-dependent RNA polymerase catalyzes the transcription of DNA into RNA using the four ribonucleoside triphosphates as substrates. The sequence is that of DNA-directed RNA polymerase subunit alpha from Shewanella denitrificans (strain OS217 / ATCC BAA-1090 / DSM 15013).